The chain runs to 472 residues: 3-isopropylmalate dehydratase large subunit (472 aa).

[4Fe-4S] cluster-binding residues include C353, C414, and C417.

The protein belongs to the aconitase/IPM isomerase family. LeuC type 1 subfamily. As to quaternary structure, heterodimer of LeuC and LeuD. Requires [4Fe-4S] cluster as cofactor.

It catalyses the reaction (2R,3S)-3-isopropylmalate = (2S)-2-isopropylmalate. Its pathway is amino-acid biosynthesis; L-leucine biosynthesis; L-leucine from 3-methyl-2-oxobutanoate: step 2/4. Catalyzes the isomerization between 2-isopropylmalate and 3-isopropylmalate, via the formation of 2-isopropylmaleate. The chain is 3-isopropylmalate dehydratase large subunit from Acinetobacter baumannii (strain ATCC 17978 / DSM 105126 / CIP 53.77 / LMG 1025 / NCDC KC755 / 5377).